A 233-amino-acid polypeptide reads, in one-letter code: Aquaglyceroporin AqpS (233 aa).

2 helical membrane-spanning segments follow: residues 11-31 (VAEA…GIMA) and 40-60 (LALV…VTIL). Residues 69 to 71 (NPA) carry the NPA 1 motif. Transmembrane regions (helical) follow at residues 89 to 109 (AYVI…HLMF), 125 to 145 (AQWL…LAGI), and 152 to 172 (VPWL…STSF). The NPA 2 motif lies at 174-176 (NPA). The chain crosses the membrane as a helical span at residues 193 to 213 (GDLPGFVIAELLGAVCALALM).

This sequence belongs to the MIP/aquaporin (TC 1.A.8) family. NIP (TC 1.A.8.12) subfamily.

Its subcellular location is the cell inner membrane. Functionally, involved in resistance to arsenic. Facilitates efflux of arsenite [As(III)]. Arsenate [As(V)] enters the cell through phosphate transport systems and is reduced to arsenite by the arsenate reductase ArsC. Internally generated arsenite flows out of the cell by downhill movement through AqpS. Can also transport the highly toxic methylarsenite [MAs(III)] and the relatively non-toxic methylarsenate [MAs(V)]. May be a component of an methylarsenite resistance pathway in which methylarsenite enters cells via AqpS, is oxidized by ArsH to methylarsenate, which exits the cells via AqpS. This pathway may confer a selective advantage for R.melliloti to grow in the presence of environmental methylarsenicals. This chain is Aquaglyceroporin AqpS, found in Rhizobium meliloti (strain 1021) (Ensifer meliloti).